Consider the following 754-residue polypeptide: MPDTLPQPPEVDRDLALDHGLTDDEYDEILDRLGRTPTFTELGIYSVMWSEHCSYKNSTALLKTLPTEGDQLLAEVGEENAGLVDVGDGKAVAFKIESHNHPSAVEPYEGAATGVGGIHRDIFTMGARPICALDSLRFGSLEESRVRYLFDGVVRGIGDYGNSFGVPTVGGEVYFEDAYEGNPLVNAMSVGVVDTDQTARAAAETPGHHVILVGAATGRDGIHGATFASAEIDEDSEEDRPSVQVGDPFTEKLLLEATLEAIREGVVGSIQDMGAAGITSSAFEMSASGGTGMDLHLDRVPTRETGMTPYEIMLSESQERMLVVCEPGDEEALAEIYGKWDLNAQRIGTVTDTGRVRAYWDDEEVATLDPAHVAGDDVPVYERDTERPAYLEETRAFNTDDVPDLAPAEVEDTLTTLLGSPNIASKRWVHEQYDTMVRTNTVVGPGASDAAVVRLKGTGKGLAVKTDCNGRYVYLNPRRGAQIAVAEAARNVTCAGGTPVALTNCCNFGNPHNPEAYWAFAKAVEGMGDAGRALDTPVTGGNVSLYNEHPEGAIFPTPTIGMLGVVDDIDTQPTAAALQNEGDALFLLTPRDWCHPERTDGSEYLSTVHDRTAGDAPHLDLDEEVAVQSATQALIREGLVQHAHDVSDGGLAVCLAESVIHSDGLGLEATLPAADRLDAALFGEAQSRVVVSVRPDDALALDAALTDHNGVRARRLGAVTTGPLRLTVGDEPVLDASPAALTAPYEAALPDAVT.

The active site involves H52. Positions 55 and 95 each coordinate ATP. E97 contacts Mg(2+). Substrate is bound by residues 98 to 101 and R120; that span reads SHNH. The active-site Proton acceptor is the H99. D121 lines the Mg(2+) pocket. Q244 is a binding site for substrate. D272 contacts Mg(2+). 316–318 lines the substrate pocket; that stretch reads ESQ. 2 residues coordinate ATP: N504 and G541. N542 is a Mg(2+) binding site. S544 contributes to the substrate binding site.

This sequence belongs to the FGAMS family. As to quaternary structure, monomer. Part of the FGAM synthase complex composed of 1 PurL, 1 PurQ and 2 PurS subunits.

The protein localises to the cytoplasm. It catalyses the reaction N(2)-formyl-N(1)-(5-phospho-beta-D-ribosyl)glycinamide + L-glutamine + ATP + H2O = 2-formamido-N(1)-(5-O-phospho-beta-D-ribosyl)acetamidine + L-glutamate + ADP + phosphate + H(+). It participates in purine metabolism; IMP biosynthesis via de novo pathway; 5-amino-1-(5-phospho-D-ribosyl)imidazole from N(2)-formyl-N(1)-(5-phospho-D-ribosyl)glycinamide: step 1/2. Its function is as follows. Part of the phosphoribosylformylglycinamidine synthase complex involved in the purines biosynthetic pathway. Catalyzes the ATP-dependent conversion of formylglycinamide ribonucleotide (FGAR) and glutamine to yield formylglycinamidine ribonucleotide (FGAM) and glutamate. The FGAM synthase complex is composed of three subunits. PurQ produces an ammonia molecule by converting glutamine to glutamate. PurL transfers the ammonia molecule to FGAR to form FGAM in an ATP-dependent manner. PurS interacts with PurQ and PurL and is thought to assist in the transfer of the ammonia molecule from PurQ to PurL. The chain is Phosphoribosylformylglycinamidine synthase subunit PurL from Salinibacter ruber (strain DSM 13855 / M31).